We begin with the raw amino-acid sequence, 1168 residues long: Zinc finger CCHC domain-containing protein 2 (1168 aa).

4 disordered regions span residues 1 to 87, 209 to 242, 561 to 693, and 932 to 978; these read MLRM…GGHA, EGSR…CAKL, KRSL…LGTE, and ATSA…SDST. Over residues 43 to 66 the composition is skewed to pro residues; sequence PPPPPPTGLPRGPPPPPPSPPRGL. Low complexity predominate over residues 67–78; sequence EPPVASGPTAGA. Residues 216-227 are compositionally biased toward acidic residues; sequence EDEPGGDDEQDA. A compositionally biased stretch (gly residues) spans 233–242; the sequence is GPEGGGCAKL. Residues 574–588 are compositionally biased toward basic and acidic residues; sequence PQVEKEKIKKTENRL. A compositionally biased stretch (low complexity) spans 626–635; sequence SSESYSSPSS. Over residues 636–655 the composition is skewed to basic and acidic residues; it reads PRHDGRESLESEEEKDRDTD. Polar residues predominate over residues 932–949; sequence ATSAQPASTGISPAQSTV. Over residues 951 to 965 the composition is skewed to pro residues; the sequence is PAVPTHTPGPAPSPS. Positions 966–978 are enriched in polar residues; that stretch reads PALTHSTAQSDST. The CCHC-type zinc-finger motif lies at 1121–1138; the sequence is VSCYNCGVSGHYAQDCKQ.

This Rattus norvegicus (Rat) protein is Zinc finger CCHC domain-containing protein 2 (Zcchc2).